Here is a 356-residue protein sequence, read N- to C-terminus: Dihydroorotate dehydrogenase (quinone) (356 aa).

Residues 68 to 72 and threonine 92 each bind FMN; that span reads AGFDK. Position 72 (lysine 72) interacts with substrate. 117–121 serves as a coordination point for substrate; sequence NRMGF. Residues asparagine 145 and asparagine 178 each coordinate FMN. Substrate is bound at residue asparagine 178. The active-site Nucleophile is the serine 181. Asparagine 183 is a substrate binding site. FMN contacts are provided by lysine 214 and threonine 242. Residue 243–244 coordinates substrate; it reads NT. FMN is bound by residues glycine 266, glycine 295, and 316 to 317; that span reads YT.

The protein belongs to the dihydroorotate dehydrogenase family. Type 2 subfamily. In terms of assembly, monomer. FMN is required as a cofactor.

It localises to the cell membrane. The enzyme catalyses (S)-dihydroorotate + a quinone = orotate + a quinol. The protein operates within pyrimidine metabolism; UMP biosynthesis via de novo pathway; orotate from (S)-dihydroorotate (quinone route): step 1/1. In terms of biological role, catalyzes the conversion of dihydroorotate to orotate with quinone as electron acceptor. The polypeptide is Dihydroorotate dehydrogenase (quinone) (Mycobacterium sp. (strain KMS)).